The primary structure comprises 41 residues: Photosystem I reaction center subunit IX (41 aa).

A helical membrane pass occupies residues tyrosine 7 to isoleucine 27.

This sequence belongs to the PsaJ family.

It localises to the plastid. It is found in the chloroplast thylakoid membrane. May help in the organization of the PsaE and PsaF subunits. The polypeptide is Photosystem I reaction center subunit IX (Oedogonium cardiacum (Filamentous green alga)).